The chain runs to 316 residues: Peroxidase 67 (316 aa).

Positions 1–19 (MLKVVLLMMIMMLASQSEA) are cleaved as a signal peptide. Pyrrolidone carboxylic acid is present on Gln-20. 4 cysteine pairs are disulfide-bonded: Cys-30–Cys-110, Cys-63–Cys-68, Cys-116–Cys-312, and Cys-196–Cys-221. Residue His-61 is the Proton acceptor of the active site. Positions 62, 65, 67, 69, and 71 each coordinate Ca(2+). Pro-159 lines the substrate pocket. His-189 lines the heme b pocket. Thr-190 contacts Ca(2+). Asn-205 is a glycosylation site (N-linked (GlcNAc...) asparagine). Ca(2+)-binding residues include Asp-236, Ser-239, and Asp-244.

Belongs to the peroxidase family. Classical plant (class III) peroxidase subfamily. Heme b is required as a cofactor. It depends on Ca(2+) as a cofactor.

It is found in the secreted. It catalyses the reaction 2 a phenolic donor + H2O2 = 2 a phenolic radical donor + 2 H2O. Its function is as follows. Removal of H(2)O(2), oxidation of toxic reductants, biosynthesis and degradation of lignin, suberization, auxin catabolism, response to environmental stresses such as wounding, pathogen attack and oxidative stress. These functions might be dependent on each isozyme/isoform in each plant tissue. This is Peroxidase 67 (PER67) from Arabidopsis thaliana (Mouse-ear cress).